The primary structure comprises 66 residues: LTCVTSKSIFGITTENCPDGQNLCFKKWYYIVPRYSDITWGCAATCPKPTNVRETIHCCETDKCNE.

4 cysteine pairs are disulfide-bonded: cysteine 3/cysteine 24, cysteine 17/cysteine 42, cysteine 46/cysteine 58, and cysteine 59/cysteine 64.

Belongs to the three-finger toxin family. Short-chain subfamily. Aminergic toxin sub-subfamily. As to quaternary structure, monomer. In terms of tissue distribution, expressed by the venom gland.

The protein resides in the secreted. Binds to the muscarinic acetylcholine receptor (CHRM). The protein is Muscarinic toxin 4 of Dendroaspis angusticeps (Eastern green mamba).